Reading from the N-terminus, the 270-residue chain is Shikimate dehydrogenase (NADP(+)) (270 aa).

Shikimate contacts are provided by residues serine 15–serine 17 and threonine 62. Lysine 66 serves as the catalytic Proton acceptor. Aspartate 78 contributes to the NADP(+) binding site. Shikimate contacts are provided by asparagine 87 and aspartate 103. Residues glycine 128–alanine 132, asparagine 152–arginine 157, and leucine 213 each bind NADP(+). Residue tyrosine 215 participates in shikimate binding. Glycine 237 contacts NADP(+).

It belongs to the shikimate dehydrogenase family. As to quaternary structure, homodimer.

It carries out the reaction shikimate + NADP(+) = 3-dehydroshikimate + NADPH + H(+). It participates in metabolic intermediate biosynthesis; chorismate biosynthesis; chorismate from D-erythrose 4-phosphate and phosphoenolpyruvate: step 4/7. Functionally, involved in the biosynthesis of the chorismate, which leads to the biosynthesis of aromatic amino acids. Catalyzes the reversible NADPH linked reduction of 3-dehydroshikimate (DHSA) to yield shikimate (SA). The protein is Shikimate dehydrogenase (NADP(+)) of Halorhodospira halophila (strain DSM 244 / SL1) (Ectothiorhodospira halophila (strain DSM 244 / SL1)).